A 761-amino-acid chain; its full sequence is Polyribonucleotide nucleotidyltransferase (761 aa).

D532 and D538 together coordinate Mg(2+). Residues 598-657 (PRVISVQIPVDKIGELIGPKGKTINAIQDETGADISIDEDGTVYIGAVDGPSAEAARAQV) enclose the KH domain. Residues 669–741 (GEQFLGTVVK…DRGKLSLAPV (73 aa)) form the S1 motif domain.

The protein belongs to the polyribonucleotide nucleotidyltransferase family. It depends on Mg(2+) as a cofactor.

Its subcellular location is the cytoplasm. It catalyses the reaction RNA(n+1) + phosphate = RNA(n) + a ribonucleoside 5'-diphosphate. Functionally, involved in mRNA degradation. Catalyzes the phosphorolysis of single-stranded polyribonucleotides processively in the 3'- to 5'-direction. This Leifsonia xyli subsp. xyli (strain CTCB07) protein is Polyribonucleotide nucleotidyltransferase.